We begin with the raw amino-acid sequence, 103 residues long: Phosphoribosyl-ATP pyrophosphatase (103 aa).

It belongs to the PRA-PH family.

The protein resides in the cytoplasm. It catalyses the reaction 1-(5-phospho-beta-D-ribosyl)-ATP + H2O = 1-(5-phospho-beta-D-ribosyl)-5'-AMP + diphosphate + H(+). It participates in amino-acid biosynthesis; L-histidine biosynthesis; L-histidine from 5-phospho-alpha-D-ribose 1-diphosphate: step 2/9. This Listeria monocytogenes serotype 4a (strain HCC23) protein is Phosphoribosyl-ATP pyrophosphatase.